A 276-amino-acid polypeptide reads, in one-letter code: Hydroxyethylthiazole kinase (276 aa).

2 residues coordinate ATP: Arg126 and Ser172. Gly199 is a substrate binding site.

Belongs to the Thz kinase family. Requires Mg(2+) as cofactor.

The catalysed reaction is 5-(2-hydroxyethyl)-4-methylthiazole + ATP = 4-methyl-5-(2-phosphooxyethyl)-thiazole + ADP + H(+). It participates in cofactor biosynthesis; thiamine diphosphate biosynthesis; 4-methyl-5-(2-phosphoethyl)-thiazole from 5-(2-hydroxyethyl)-4-methylthiazole: step 1/1. Catalyzes the phosphorylation of the hydroxyl group of 4-methyl-5-beta-hydroxyethylthiazole (THZ). In Burkholderia pseudomallei (strain 1710b), this protein is Hydroxyethylthiazole kinase.